We begin with the raw amino-acid sequence, 421 residues long: Zinc finger protein Pegasus (421 aa).

A disordered region spans residues 35–55; it reads GDKEAETLQGAGTEGDQNGLD. C2H2-type zinc fingers lie at residues 82-104, 110-132, and 138-161; these read LKCRYCNYASKGTARLIEHIRIH, HRCHLCPFASAYERHLEAHMRSH, and YKCELCSFRCSDRSNLSHHRRRKH. A compositionally biased stretch (polar residues) spans 229–238; sequence SMTKSSQTSG. Disordered stretches follow at residues 229-249 and 292-358; these read SMTKSSQTSGLPRDPQDLMVD and QPAT…PTLP. Residues 292–313 show a composition bias toward low complexity; it reads QPATPAVVSSVSASIAQSSSPT. Positions 339 to 351 are enriched in polar residues; the sequence is HTSTPSISNSQPS. 2 consecutive C2H2-type zinc fingers follow at residues 366 to 388 and 394 to 418; these read HHCQHCDMYFADNILYTIHMGCH and FQCNICGCKCKNKYDFACHFARGQH.

Belongs to the Ikaros C2H2-type zinc-finger protein family. In terms of assembly, probably self-associates.

It localises to the nucleus. Functionally, transcriptional repressor that binds the core 5'GNNTGTNG-3' DNA consensus sequence. In Gallus gallus (Chicken), this protein is Zinc finger protein Pegasus (IKZF5).